Consider the following 281-residue polypeptide: MARTGRRAAVGRPARTSSLTERRRVLLAGVRSHTRFYKAFAREVREFNATRICGTLLTLMSGSLQGRSLFEATRVTLICEVDLGPRRPDCICVFEFANDKTLGGVCVILELKTCKSISSGDTASKREQRTTGMKQLRHSLKLLQSLAPPGDKVVYLCPILVFVAQRTLRVSRVTRLVPQKISGNITAAVRMLQSLSTYAVPPEPQTRRSRRRVAATARPQRPPSPTRDPEGTAGHPAPPESDPPSPGVVGVAAEGGGVLQKIAALFCVPVAAKSRPRTKTE.

The interval 199–252 (AVPPEPQTRRSRRRVAATARPQRPPSPTRDPEGTAGHPAPPESDPPSPGVVGVA) is disordered. A compositionally biased stretch (pro residues) spans 236 to 246 (PAPPESDPPSP).

The protein belongs to the herpesviridae UL24 family.

Its subcellular location is the virion. It localises to the host cytoplasm. The protein resides in the host nucleus. The protein localises to the host nucleolus. It is found in the host Golgi apparatus. Functionally, may participate in nuclear egress of viral particles. Plays a role in the dispersal of several host nucleolar proteins including NCL/nucleolin and NPM1. Since deletion of host NCL/nucleolin negatively impact on nuclear egress, UL24 supposedly acts on this process through its effect on host nucleoli. The chain is Protein UL24 from Human herpesvirus 2 (strain HG52) (HHV-2).